The sequence spans 613 residues: TANK-binding kinase 1-binding protein 1 (613 aa).

The tract at residues 1–280 (MESMFEDDIS…QDLASNQSEC (280 aa)) is homodimerization. Residues 48–162 (YGDIKERLGG…ALVETHLRQI (115 aa)) adopt a coiled-coil conformation. S184 carries the phosphoserine modification. Positions 218 to 277 (TSVSVSELERRRLEEALEAAQGEARGAQLREEQLQAECERLQGELKQLQETRAQDLASNQ) form a coiled coil. Residues 281–330 (GMAWVKRVGDDQVNLALAYTELTEELGRLRELSSLQGRILRTLLQEQARN) form an interaction with TBK1 and IKBKE region. The interval 328–457 (ARNAGQRHSP…HHAKAGFQGR (130 aa)) is disordered. Pro residues predominate over residues 346–361 (PACPSPSPPARPPPCA). The span at 362–372 (PCQSPAAQRRS) shows a compositional bias: low complexity. Residues S365, S372, S379, S385, S400, and S415 each carry the phosphoserine modification. Over residues 389-406 (PSCPSPVPQRRSPVPPSC) the composition is skewed to pro residues. A compositionally biased stretch (pro residues) spans 416–433 (PVPPSCPAPQPRPPPPPG). Phosphoserine is present on residues S502 and S532. A UBZ1-type zinc finger spans residues 581–607 (IRSCPLCQLGFPVGYPDDALIKHIDSH). Residues C584, C587, H603, and H607 each coordinate Zn(2+).

Homodimer. May form a heterodimer with NAP1. Interacts with TKB1 and IKBKE. Weakly interacts with DDX3X.

Its function is as follows. Adapter protein which constitutively binds TBK1 and IKBKE playing a role in antiviral innate immunity. Essential for the efficient induction of IRF-dependent transcription following infection with Sendai virus. This is TANK-binding kinase 1-binding protein 1 from Rattus norvegicus (Rat).